Reading from the N-terminus, the 209-residue chain is Putative amino acid efflux protein YcgF (209 aa).

Transmembrane regions (helical) follow at residues 1–21 (MNIF…VGPV), 39–59 (IFGL…YFGL), 62–82 (FLTA…VLTY), 110–130 (FASG…WLGI), 147–167 (LLIY…CMAI), and 184–204 (LTGI…YQGI).

The protein belongs to the Rht family.

Its subcellular location is the cell membrane. This is Putative amino acid efflux protein YcgF (ycgF) from Bacillus subtilis (strain 168).